We begin with the raw amino-acid sequence, 713 residues long: B3 domain-containing transcription factor VAL3 (713 aa).

Residues 328–427 (FEKILSATDT…KLILGFRKAS (100 aa)) constitute a DNA-binding region (TF-B3). Disordered stretches follow at residues 459 to 478 (VECSSGKKKSSMMITRSKRQ) and 616 to 713 (LNSD…TSSM). Residues 464 to 477 (GKKKSSMMITRSKR) are compositionally biased toward basic residues. Positions 616–629 (LNSDNGLHQSANNS) are enriched in polar residues. Over residues 663–674 (TKSETLPHDDTV) the composition is skewed to basic and acidic residues. The segment covering 676-688 (SSFTSPSSSSAHS) has biased composition (low complexity). Over residues 690–700 (NNKEDEGKLKT) the composition is skewed to basic and acidic residues. Over residues 701-713 (TTEIADTTTTSSM) the composition is skewed to low complexity.

It localises to the nucleus. In terms of biological role, may be involved in plant development. In Arabidopsis thaliana (Mouse-ear cress), this protein is B3 domain-containing transcription factor VAL3 (VAL3).